Here is a 599-residue protein sequence, read N- to C-terminus: Transcription factor COE4 (599 aa).

The segment at 64–67 is interaction with DNA; it reads RKSN. Residues 152 to 171 form a C5-type zinc finger; sequence CRVLLTHEIMCSRCCDRKSC. Interaction with DNA stretches follow at residues 198–205 and 237–240; these read NCLKNAGN and NNSK. The region spanning 256–339 is the IPT/TIG domain; sequence PCIKAISPGE…KGAPGRFVYT (84 aa). 2 disordered regions span residues 449-473 and 556-586; these read GYARSCGSASPRFAPSPGSQQSSYG and VLRPPSSPSQACPRAHREGLPDQPFEDTDKF. Low complexity predominate over residues 464-473; it reads SPGSQQSSYG.

It belongs to the COE family. In terms of assembly, forms either a homodimer or a heterodimer with a related family member. In terms of tissue distribution, expressed in the olfactory epithelium, including in both neuronal and basal cell layers. Absent in the vomeronasal organ. Absent from NK cells and CD8(+) T cells.

It is found in the nucleus. Transcription factor. Positively modulates transcription, perhaps less strongly than other early B cell factor/EBF family proteins. Binds an EBF1/Olf-1 consensus site in vitro. The chain is Transcription factor COE4 (Ebf4) from Mus musculus (Mouse).